Reading from the N-terminus, the 156-residue chain is MRNNEKQELLVKEFKAILKAERFGSQGEIVDALRQSGFDNINQSKVSRMLTKFGAVRTRNAKMEMVYCLPVELGVPTVSSSLRELVMDIDYNNALVVIHTGPGAAQLIARLLDSLGKAEGILGVVAGDDTIFITPTRNIEVAELFDSVCDLFEYSV.

It belongs to the ArgR family.

It localises to the cytoplasm. Its pathway is amino-acid biosynthesis; L-arginine biosynthesis [regulation]. Regulates arginine biosynthesis genes. In Aliivibrio fischeri (strain ATCC 700601 / ES114) (Vibrio fischeri), this protein is Arginine repressor.